The following is a 54-amino-acid chain: Hydrophobic protein RCI2B (54 aa).

Helical transmembrane passes span 2–22 (STAT…GVFL) and 32–52 (ICLI…LYII).

This sequence belongs to the UPF0057 (PMP3) family.

The protein resides in the membrane. This chain is Hydrophobic protein RCI2B (RCI2B), found in Arabidopsis thaliana (Mouse-ear cress).